A 730-amino-acid polypeptide reads, in one-letter code: uncharacterized protein (730 aa).

Positions 615-625 (FDKENSFDPSD) are enriched in basic and acidic residues. Disordered regions lie at residues 615–667 (FDKE…SSFS) and 684–730 (KSGS…FGKI). 2 stretches are compositionally biased toward low complexity: residues 653-667 (SSSS…SSFS) and 684-701 (KSGS…NSSS). A compositionally biased stretch (basic residues) spans 713–723 (KKKKKKKKKKS).

This is an uncharacterized protein from Saccharomyces cerevisiae (strain ATCC 204508 / S288c) (Baker's yeast).